Consider the following 887-residue polypeptide: Pyruvate dehydrogenase E1 component (887 aa).

3 residues coordinate Mg(2+): Asp-231, Asn-261, and Gln-263. Lys-716 is modified (N6-acetyllysine).

In terms of assembly, homodimer. Part of the PDH complex, consisting of multiple copies of pyruvate dehydrogenase (E1), dihydrolipoamide acetyltransferase (E2) and lipoamide dehydrogenase (E3). The cofactor is Mg(2+). It depends on thiamine diphosphate as a cofactor.

It catalyses the reaction N(6)-[(R)-lipoyl]-L-lysyl-[protein] + pyruvate + H(+) = N(6)-[(R)-S(8)-acetyldihydrolipoyl]-L-lysyl-[protein] + CO2. Functionally, component of the pyruvate dehydrogenase (PDH) complex, that catalyzes the overall conversion of pyruvate to acetyl-CoA and CO(2). The sequence is that of Pyruvate dehydrogenase E1 component (aceE) from Escherichia coli O157:H7.